The sequence spans 614 residues: Chaperone protein DnaK (614 aa).

Thr-176 bears the Phosphothreonine; by autocatalysis mark. Positions 576 to 614 (YQQQQSQGGEAGAANGDASKKDDNTVDGDFHEVHDDDKK) are disordered. Over residues 577–589 (QQQQSQGGEAGAA) the composition is skewed to low complexity. Residues 593 to 614 (ASKKDDNTVDGDFHEVHDDDKK) are compositionally biased toward basic and acidic residues.

This sequence belongs to the heat shock protein 70 family.

In terms of biological role, acts as a chaperone. The protein is Chaperone protein DnaK of Fructilactobacillus sanfranciscensis (Lactobacillus sanfranciscensis).